A 2453-amino-acid chain; its full sequence is Nuclear receptor corepressor 1 (2453 aa).

Residues 1–29 (MSSSGYPPNQGAFSTEQSRYPSHSVQYTF) show a composition bias toward polar residues. Disordered stretches follow at residues 1–116 (MSSS…QVSD), 147–177 (PAFGVKHEAPSSPLSGQPCGDDQNASPSKLS), and 206–231 (QQQLEEEAAKPPEPEKPVSPPPVEQK). Positions 1 to 373 (MSSSGYPPNQ…QRGAGLSATI (373 aa)) are interaction with ZBTB33 and HEXIM1. Positions 51–64 (SQASQLLQQQQQQQ) are enriched in low complexity. Composition is skewed to basic and acidic residues over residues 77–88 (PGSDRPQERRSG) and 99–116 (VDHDSLESKRPRLEQVSD). Ser172 bears the Phosphoserine mark. A coiled-coil region spans residues 174 to 216 (SKLSKEELIQSMDRVDREIAKVEQQILKLKKKQQQLEEEAAKP). The segment covering 212-221 (EAAKPPEPEK) has biased composition (basic and acidic residues). Phosphoserine is present on Ser224. Residues 254 to 312 (FEGLGPKVELPLYNQPSDTKVYHENIKTNQVMRKKLILFFKRRNHARKQREQKICQRYD) form an interaction with SIN3A/B region. Residues 299–328 (ARKQREQKICQRYDQLMEAWEKKVDRIENN) adopt a coiled-coil conformation. An SANT 1 domain is found at 435-486 (QFMNVWTDHEKEIFKDKFIQHPKNFGLIASYLERKSVPDCVLYYYLTKKNEN). Disordered stretches follow at residues 497–631 (KRRG…TEEE) and 677–908 (LLQQ…PERQ). Positions 501 to 550 (RNQQIARPSQEEKVEEKEEDKAEKTEKKEEEKKDDEEKDDKEDSKETTKE) form a coiled coil. Basic and acidic residues-rich tracts occupy residues 509-531 (SQEEKVEEKEEDKAEKTEKKEEE) and 541-556 (KEDSKETTKEKDRTEA). The span at 592-604 (EAAAANAAAAATE) shows a compositional bias: low complexity. Over residues 605–616 (EPPPPLPPPPEP) the composition is skewed to pro residues. The SANT 2 domain maps to 622–673 (VETSRWTEEEMEVAKKGLVEHGRNWAAIAKMVGTKSEAQCKNFYFNYKRRHN). Residues 697 to 707 (QCESVASTVSA) are compositionally biased toward polar residues. Residues 708–727 (QEDEDIEASNEEENPEDSEG) are compositionally biased toward acidic residues. The span at 771–787 (TTDPAPCASPSSAVPTT) shows a compositional bias: low complexity. Basic and acidic residues predominate over residues 851-885 (GEGDAKERDLESTSEKTEARDEDVVVAEQIERPEP). Phosphoserine is present on Ser1011. The tract at residues 1034-1058 (VRLPTTRPTRPPPPLIPSSKTTVAS) is disordered. Residue Lys1117 forms a Glycyl lysine isopeptide (Lys-Gly) (interchain with G-Cter in SUMO1); alternate linkage. Lys1117 participates in a covalent cross-link: Glycyl lysine isopeptide (Lys-Gly) (interchain with G-Cter in SUMO2); alternate. At Ser1122 the chain carries Phosphoserine. Residue Lys1195 forms a Glycyl lysine isopeptide (Lys-Gly) (interchain with G-Cter in SUMO2) linkage. Phosphoserine is present on residues Ser1206, Ser1207, Ser1274, Ser1292, and Ser1333. Lys1347 carries the post-translational modification N6-acetyllysine. At Thr1378 the chain carries Phosphothreonine. Residue Lys1400 forms a Glycyl lysine isopeptide (Lys-Gly) (interchain with G-Cter in SUMO2) linkage. Lys1423 participates in a covalent cross-link: Glycyl lysine isopeptide (Lys-Gly) (interchain with G-Cter in SUMO2); alternate. N6-acetyllysine; alternate is present on Lys1423. The tract at residues 1450–1544 (GEPVRARHTS…SIPAKSPVPG (95 aa)) is disordered. Residues Ser1459 and Ser1481 each carry the phosphoserine modification. Polar residues predominate over residues 1459-1469 (SVVSSGPSVLR). Polar residues predominate over residues 1495 to 1514 (VSYQNTISRGSPMMNRTSDV). Residues 1510–2453 (RTSDVSSSKS…QYETLSDSDD (944 aa)) form an interaction with C1D region. Lys1525 participates in a covalent cross-link: Glycyl lysine isopeptide (Lys-Gly) (interchain with G-Cter in SUMO2). At Ser1598 the chain carries Phosphoserine. 2 disordered regions span residues 1697–1780 (RPYN…VRTQ) and 1902–1939 (ALPSGKAQPHASVVYSEAGKDKGPPPKSRYEEELRTRG). Composition is skewed to basic and acidic residues over residues 1718-1745 (AEREREREREKERERERERERERERERI) and 1919-1937 (AGKDKGPPPKSRYEEELRT). The short motif at 1949–1953 (IDVII) is the CORNR box 1 element. The segment at 1959–2060 (SDKDARERGS…SSQSEGMGQV (102 aa)) is disordered. Over residues 1968-1979 (SQSSDSSSSLSS) the composition is skewed to low complexity. Residues Ser1993 and Ser1997 each carry the phosphoserine modification. The tract at residues 2050-2129 (PSSQSEGMGQ…QSQTVLHPRP (80 aa)) is ID1. The required for interaction with RARA in the absence of its ligand stretch occupies residues 2065-2068 (RLIT). Residues 2073–2077 (ICQII) carry the CORNR box 2 motif. Residues 2088–2124 (SQASTSTFQTSPSALSSTPVRTKTSSRYSPESQSQTV) are compositionally biased toward polar residues. The disordered stretch occupies residues 2088-2174 (SQASTSTFQT…SPPQGPAVHE (87 aa)). Phosphoserine is present on residues Ser2116, Ser2134, Ser2150, Ser2165, and Ser2198. Over residues 2138 to 2156 (LVDKSRGSRPGKSPERSHI) the composition is skewed to basic and acidic residues. The segment at 2226-2287 (IFRKLNSSGG…EDIIRKALMG (62 aa)) is ID2. The CORNR box 3 signature appears at 2277 to 2281 (LEDII). The disordered stretch occupies residues 2303 to 2396 (PVGIMPGSAS…RPSSTGSTQF (94 aa)). Over residues 2310–2319 (SASTSVVTSS) the composition is skewed to low complexity. Thr2412 bears the Phosphothreonine mark. Phosphoserine occurs at positions 2449 and 2451.

Belongs to the N-CoR nuclear receptor corepressors family. Forms a large corepressor complex that contains SIN3A/B and histone deacetylases HDAC1 and HDAC2. This complex associates with the thyroid receptor (TR) and the retinoid acid receptor (RAR) in the absence of ligand. Interacts directly with RARA; the interaction is facilitated with RARA trimethylation. Component of the N-Cor repressor complex, at least composed of CBFA2T3, HEXIM1, NCOR1, NCOR2, HDAC3, TBL1X, TBL1XR1, CORO2A and GPS2. Interacts with ZBTB33; the interaction serves to recruit the N-CoR complex to promoter regions containing methylated CpG dinucleotides. Interacts with TRIM28 and KDM3A. Interacts (via the RD1 domain) with BAZ1A (via its N-terminal); the interaction corepresses a number of NCOR1-regulated genes. Interacts with BCL6, C1D, DACH1, HEXIM1, HDAC7, RORA, RORC, SAP30, SIAH2, SIN3A and SIN3B. May interact with DEAF1. Interacts with RXRA. Interacts with SETD5. Interacts with VDR. Interacts with ZBTB7A. Interacts with AR. Interacts with HDAC3. Ubiquitinated; mediated by SIAH2 and leading to its subsequent proteasomal degradation. As to expression, ubiquitous.

It is found in the nucleus. In terms of biological role, mediates transcriptional repression by certain nuclear receptors. Part of a complex which promotes histone deacetylation and the formation of repressive chromatin structures which may impede the access of basal transcription factors. Participates in the transcriptional repressor activity produced by BCL6. Recruited by ZBTB7A to the androgen response elements/ARE on target genes, negatively regulates androgen receptor signaling and androgen-induced cell proliferation. Mediates the NR1D1-dependent repression and circadian regulation of TSHB expression. The NCOR1-HDAC3 complex regulates the circadian expression of the core clock gene ARTNL/BMAL1 and the genes involved in lipid metabolism in the liver. The chain is Nuclear receptor corepressor 1 (Ncor1) from Mus musculus (Mouse).